We begin with the raw amino-acid sequence, 318 residues long: Transaldolase (318 aa).

The Schiff-base intermediate with substrate role is filled by lysine 132.

It belongs to the transaldolase family. Type 1 subfamily. In terms of assembly, homodimer.

Its subcellular location is the cytoplasm. The enzyme catalyses D-sedoheptulose 7-phosphate + D-glyceraldehyde 3-phosphate = D-erythrose 4-phosphate + beta-D-fructose 6-phosphate. It participates in carbohydrate degradation; pentose phosphate pathway; D-glyceraldehyde 3-phosphate and beta-D-fructose 6-phosphate from D-ribose 5-phosphate and D-xylulose 5-phosphate (non-oxidative stage): step 2/3. Transaldolase is important for the balance of metabolites in the pentose-phosphate pathway. In Shewanella sp. (strain ANA-3), this protein is Transaldolase.